The primary structure comprises 240 residues: Uridylate kinase (240 aa).

Residue 13–16 (KASG) coordinates ATP. Positions 21–26 (GSQGFG) are involved in allosteric activation by GTP. Residue glycine 55 coordinates UMP. ATP contacts are provided by glycine 56 and arginine 60. Residues aspartate 75 and 136–143 (TGNPFFTT) contribute to the UMP site. 4 residues coordinate ATP: threonine 163, glutamine 164, tyrosine 169, and aspartate 172.

This sequence belongs to the UMP kinase family. In terms of assembly, homohexamer.

Its subcellular location is the cytoplasm. It catalyses the reaction UMP + ATP = UDP + ADP. Its pathway is pyrimidine metabolism; CTP biosynthesis via de novo pathway; UDP from UMP (UMPK route): step 1/1. Allosterically activated by GTP. Inhibited by UTP. Its function is as follows. Catalyzes the reversible phosphorylation of UMP to UDP. In Sinorhizobium medicae (strain WSM419) (Ensifer medicae), this protein is Uridylate kinase.